A 278-amino-acid polypeptide reads, in one-letter code: Energy-coupling factor transporter ATP-binding protein EcfA1 (278 aa).

In terms of domain architecture, ABC transporter spans 5–239; that stretch reads LLLESVSYQY…QDKLEAAGID (235 aa). 39–46 serves as a coordination point for ATP; sequence GPNGSGKS.

This sequence belongs to the ABC transporter superfamily. Energy-coupling factor EcfA family. In terms of assembly, forms a stable energy-coupling factor (ECF) transporter complex composed of 2 membrane-embedded substrate-binding proteins (S component), 2 ATP-binding proteins (A component) and 2 transmembrane proteins (T component).

Its subcellular location is the cell membrane. In terms of biological role, ATP-binding (A) component of a common energy-coupling factor (ECF) ABC-transporter complex. Unlike classic ABC transporters this ECF transporter provides the energy necessary to transport a number of different substrates. In Halalkalibacterium halodurans (strain ATCC BAA-125 / DSM 18197 / FERM 7344 / JCM 9153 / C-125) (Bacillus halodurans), this protein is Energy-coupling factor transporter ATP-binding protein EcfA1.